We begin with the raw amino-acid sequence, 195 residues long: Interferon omega-1 (195 aa).

A signal peptide spans 1-23 (MAFVLSLLMALVLVSYGPGGSLG). 2 cysteine pairs are disulfide-bonded: cysteine 24–cysteine 122 and cysteine 52–cysteine 162.

This sequence belongs to the alpha/beta interferon family.

It localises to the secreted. This chain is Interferon omega-1 (IFNW1), found in Bos taurus (Bovine).